The sequence spans 136 residues: MALYEHVFLARQDIAPQQVDELLKTYKNVIESHGGKVERTENWGLRSLAYRIRKNRKAHYVLINIDAPAAAIAEMERQMRINEDILRYITIRVEKHEKEQSAMLSRPDRDDFPGKDEERPRPSRRQYEDVVEGGVE.

The segment covering Glu97 to Glu128 has biased composition (basic and acidic residues). The segment at Glu97–Glu136 is disordered.

The protein belongs to the bacterial ribosomal protein bS6 family.

In terms of biological role, binds together with bS18 to 16S ribosomal RNA. This Bartonella bacilliformis (strain ATCC 35685 / KC583 / Herrer 020/F12,63) protein is Small ribosomal subunit protein bS6.